The primary structure comprises 250 residues: MSQIDENIRYGGAANETDGEDAQRKAQEREAKKAEVRKRLEEAGQKKQKKGFLTPERKKKLRKLLMNKAAEDLKTQQLRKEQERVKVLAERTVALPNVDSIDDHAKLEAIYNDLFSRLCNLEEEKYDINHITTETETTINQLNIEVNDLRGKFVKPSLKKVSKYDNKFKKMAEAKKEDGSKNLRNNLKTVKKESVFTQIANKKKSDKPEWSKKKEEKKEESAPEPVIEPVEEEETAASEGEEEEEEADEE.

Disordered regions lie at residues 1 to 59 (MSQI…ERKK) and 194 to 250 (SVFT…ADEE). 2 stretches are compositionally biased toward basic and acidic residues: residues 21 to 45 (DAQR…EAGQ) and 206 to 221 (DKPE…KEES). The segment covering 229 to 250 (PVEEEETAASEGEEEEEEADEE) has biased composition (acidic residues).

Belongs to the troponin I family. In terms of tissue distribution, strongly expressed in body wall muscle during embryogenesis, reduces during the larval stages to adult. In late-stage larvae and adults, expression is evident in the proximal gonad of both hermaphrodites and males.

Troponin I is the inhibitory subunit of troponin, the thin filament regulatory complex which confers calcium-sensitivity to muscle actomyosin ATPase activity. The sequence is that of Troponin I 1 (tni-1) from Caenorhabditis elegans.